The following is a 253-amino-acid chain: Ribonuclease HII (253 aa).

The region spanning 70–253 is the RNase H type-2 domain; sequence PLVAGIDEVG…RSFSPVQNAL (184 aa). 3 residues coordinate a divalent metal cation: D76, E77, and D168.

It belongs to the RNase HII family. The cofactor is Mn(2+). It depends on Mg(2+) as a cofactor.

The protein resides in the cytoplasm. It carries out the reaction Endonucleolytic cleavage to 5'-phosphomonoester.. In terms of biological role, endonuclease that specifically degrades the RNA of RNA-DNA hybrids. This chain is Ribonuclease HII, found in Latilactobacillus sakei subsp. sakei (strain 23K) (Lactobacillus sakei subsp. sakei).